Here is a 230-residue protein sequence, read N- to C-terminus: Urease accessory protein UreF (230 aa).

It belongs to the UreF family. UreD, UreF and UreG form a complex that acts as a GTP-hydrolysis-dependent molecular chaperone, activating the urease apoprotein by helping to assemble the nickel containing metallocenter of UreC. The UreE protein probably delivers the nickel.

The protein localises to the cytoplasm. Its function is as follows. Required for maturation of urease via the functional incorporation of the urease nickel metallocenter. The polypeptide is Urease accessory protein UreF (Allorhizobium ampelinum (strain ATCC BAA-846 / DSM 112012 / S4) (Agrobacterium vitis (strain S4))).